The chain runs to 338 residues: Heat-inducible transcription repressor HrcA (338 aa).

The protein belongs to the HrcA family.

Its function is as follows. Negative regulator of class I heat shock genes (grpE-dnaK-dnaJ and groELS operons). Prevents heat-shock induction of these operons. The sequence is that of Heat-inducible transcription repressor HrcA from Streptomyces avermitilis (strain ATCC 31267 / DSM 46492 / JCM 5070 / NBRC 14893 / NCIMB 12804 / NRRL 8165 / MA-4680).